A 254-amino-acid chain; its full sequence is Triosephosphate isomerase (254 aa).

9–11 (NWK) is a substrate binding site. Catalysis depends on histidine 98, which acts as the Electrophile. The active-site Proton acceptor is the glutamate 170. Substrate is bound by residues glycine 176, serine 215, and 236–237 (GG).

Belongs to the triosephosphate isomerase family. Homodimer.

The protein resides in the cytoplasm. The catalysed reaction is D-glyceraldehyde 3-phosphate = dihydroxyacetone phosphate. The protein operates within carbohydrate biosynthesis; gluconeogenesis. It functions in the pathway carbohydrate degradation; glycolysis; D-glyceraldehyde 3-phosphate from glycerone phosphate: step 1/1. Its function is as follows. Involved in the gluconeogenesis. Catalyzes stereospecifically the conversion of dihydroxyacetone phosphate (DHAP) to D-glyceraldehyde-3-phosphate (G3P). In Buchnera aphidicola subsp. Cinara cedri (strain Cc), this protein is Triosephosphate isomerase.